Consider the following 34-residue polypeptide: COP9 signalosome complex subunit 5a (34 aa).

The protein belongs to the peptidase M67A family. CSN5 subfamily. As to quaternary structure, component of the CSN complex, probably composed of CSN1, CSN2, CSN3, CSN4, CSN5 (CSN5A or CSN5B), CSN6 (CSN6A or CSN6B), CSN7 and CSN8. A divalent metal cation is required as a cofactor.

The protein resides in the cytoplasm. It is found in the nucleus. Its function is as follows. Probable protease subunit of the COP9 signalosome complex (CSN), a complex involved in various cellular and developmental processes such as photomorphogenesis and auxin and jasmonate responses. The CSN complex is an essential regulator of the ubiquitin (Ubl) conjugation pathway by mediating the deneddylation of the cullin subunits of the SCF-type E3 ligase complexes, leading to decrease the Ubl ligase activity of SCF. In the complex, it probably acts as the catalytic center that mediates the cleavage of Nedd8 from cullins. It however has no metalloprotease activity by itself and requires the other subunits of the CSN complex. The CSN complex is involved in repression of photomorphogenesis in darkness by regulating the activity of COP1-containing Ubl ligase complexes. The polypeptide is COP9 signalosome complex subunit 5a (CSN5A) (Brassica oleracea (Wild cabbage)).